The following is a 77-amino-acid chain: Exodeoxyribonuclease 7 small subunit (77 aa).

This sequence belongs to the XseB family. Heterooligomer composed of large and small subunits.

The protein resides in the cytoplasm. The catalysed reaction is Exonucleolytic cleavage in either 5'- to 3'- or 3'- to 5'-direction to yield nucleoside 5'-phosphates.. Functionally, bidirectionally degrades single-stranded DNA into large acid-insoluble oligonucleotides, which are then degraded further into small acid-soluble oligonucleotides. The sequence is that of Exodeoxyribonuclease 7 small subunit from Lysinibacillus sphaericus (strain C3-41).